The following is a 539-amino-acid chain: Chaperone Ric-8A (539 aa).

A disordered region spans residues 507–539; that stretch reads MGITPSGNLAPMENAIRDMADERSSSDSDLGLD. The span at 521–532 shows a compositional bias: basic and acidic residues; the sequence is AIRDMADERSSS.

This sequence belongs to the synembryn family.

It is found in the cytoplasm. Its subcellular location is the cell cortex. In terms of biological role, chaperone that specifically binds and folds nascent G alpha proteins prior to G protein heterotrimer formation, promoting their stability and activity: folds GNAI1, GNAO1, GNA13 and GNAQ. Does not fold G(s) G-alpha proteins GNAS nor GNAL. Also acts as a guanine nucleotide exchange factor (GEF) for G alpha proteins by stimulating exchange of bound GDP for free GTP. This chain is Chaperone Ric-8A (RIC8A), found in Gallus gallus (Chicken).